The following is a 63-amino-acid chain: Small ribosomal subunit protein eS17 (63 aa).

This sequence belongs to the eukaryotic ribosomal protein eS17 family.

The polypeptide is Small ribosomal subunit protein eS17 (Methanococcus maripaludis (strain DSM 14266 / JCM 13030 / NBRC 101832 / S2 / LL)).